Reading from the N-terminus, the 715-residue chain is Fatty acid oxidation complex subunit alpha (715 aa).

An enoyl-CoA hydratase/isomerase region spans residues 1–190 (MIYQGKAITV…KVGAVDAVVA (190 aa)). Asp-297 is a substrate binding site. The 3-hydroxyacyl-CoA dehydrogenase stretch occupies residues 312-715 (KDVKLAAVLG…MAKNGQKFFG (404 aa)). Residues Met-325, Asp-344, 401-403 (VVE), Lys-408, and Ser-430 contribute to the NAD(+) site. Residue His-451 is the For 3-hydroxyacyl-CoA dehydrogenase activity of the active site. Residue Asn-454 participates in NAD(+) binding. Substrate contacts are provided by Asn-501 and Tyr-660.

In the N-terminal section; belongs to the enoyl-CoA hydratase/isomerase family. The protein in the C-terminal section; belongs to the 3-hydroxyacyl-CoA dehydrogenase family. In terms of assembly, heterotetramer of two alpha chains (FadB) and two beta chains (FadA).

The catalysed reaction is a (3S)-3-hydroxyacyl-CoA + NAD(+) = a 3-oxoacyl-CoA + NADH + H(+). The enzyme catalyses a (3S)-3-hydroxyacyl-CoA = a (2E)-enoyl-CoA + H2O. It carries out the reaction a 4-saturated-(3S)-3-hydroxyacyl-CoA = a (3E)-enoyl-CoA + H2O. It catalyses the reaction (3S)-3-hydroxybutanoyl-CoA = (3R)-3-hydroxybutanoyl-CoA. The catalysed reaction is a (3Z)-enoyl-CoA = a 4-saturated (2E)-enoyl-CoA. The enzyme catalyses a (3E)-enoyl-CoA = a 4-saturated (2E)-enoyl-CoA. The protein operates within lipid metabolism; fatty acid beta-oxidation. Its function is as follows. Involved in the aerobic and anaerobic degradation of long-chain fatty acids via beta-oxidation cycle. Catalyzes the formation of 3-oxoacyl-CoA from enoyl-CoA via L-3-hydroxyacyl-CoA. It can also use D-3-hydroxyacyl-CoA and cis-3-enoyl-CoA as substrate. This Pseudomonas paraeruginosa (strain DSM 24068 / PA7) (Pseudomonas aeruginosa (strain PA7)) protein is Fatty acid oxidation complex subunit alpha.